The primary structure comprises 112 residues: Thioredoxin-like protein YdfQ (112 aa).

In terms of domain architecture, Thioredoxin spans 1–107 (MKEMTGLHSL…LEQKLKRVYR (107 aa)). Cysteines 32 and 35 form a disulfide.

This Bacillus subtilis (strain 168) protein is Thioredoxin-like protein YdfQ (ydfQ).